The primary structure comprises 674 residues: MTIRHQGQQYRPRMAFLQKIEALVKDMQNPETGVRMQNQRVLVTSVPHAMTGSDVLQWIVQRLWISSLEAQNLGNFIVRYGYIYPLQDPKNLILKPDGSLYRFQTPYFWPTQQWPAEDTDYAIYLAKRNIKKKGILEEYEKENYNFLNQKMNYKWDFVIMQAKEQYRAGKERNKADRYALDCQEKAYWLVHRCPPGMDNVLDYGLDRVTNPNEVKVNQKQTVVAVKKEIMYYQQALMRSTVKSSVSLGGIVKYSEQFSSNDAIMSGCLPSNPWITDDTQFWDLNAKLVEIPTKMRVERWAFNFSELIRDPKGRQSFQYFLKKEFSGENLGFWEACEDLKYGDQSKVKEKAEEIYKLFLAPGARRWINIDGKTMDITVKGLKHPHRYVLDAAQTHIYMLMKKDSYARYLKSPIYKDMLAKAIEPQETTKKSSTLPFMRRHLRSSPSPVILRQLEEEAKAREAANTVDITQPGQHMAPSPHLTVYTGTCMPPSPSSPFSSSCRSPRKPFASPSRFIRRPSTTICPSPIRVALESSSGLEQKGECSGSMAPRGPSVTESSEASLDTSWPRSRPRAPPKARMALSFSRFLRRGCLASPVFARLSPKCPAVSHGRVQPLGDVGQQLPRLKSKRVANFFQIKMDVPTGSGTCLMDSEDAGTGESGDRATEKEVICPWESL.

In terms of domain architecture, DEP spans 30–105 (PETGVRMQNQ…PDGSLYRFQT (76 aa)). Residues 219–280 (KQTVVAVKKE…NPWITDDTQF (62 aa)) form the G protein gamma domain. One can recognise an RGS domain in the interval 298–413 (RWAFNFSELI…YARYLKSPIY (116 aa)). Residues 533–573 (SSGLEQKGECSGSMAPRGPSVTESSEASLDTSWPRSRPRAP) form a disordered region. The segment covering 553 to 565 (VTESSEASLDTSW) has biased composition (polar residues).

Heterodimer with GNB5. Interacts with RGS7BP, leading to regulate the subcellular location of the heterodimer formed with GNB5. Component of the RGS9-1-Gbeta5 complex composed of RGS9 (RGS9-1), Gbeta5 (GNB5) and RGS9BP. Interacts with PDE6G and GNAT1. Post-translationally, retinal isoform 3 is light-dependent phosphorylated at 'Ser-478'. Phosphorylation is decreased by light exposition. As to expression, highly expressed in the caudate and putamen, lower levels found in the hypothalamus and nucleus accumbens and very low levels in cerebellum. Not expressed in globus pallidus or cingulate cortex. Isoform 2 is expressed predominantly in pineal gland and retina. Isoform 3 is expressed in retina (abundant in photoreceptors).

Its subcellular location is the membrane. In terms of biological role, inhibits signal transduction by increasing the GTPase activity of G protein alpha subunits thereby driving them into their inactive GDP-bound form. Binds to GNAT1. Involved in phototransduction; key element in the recovery phase of visual transduction. The chain is Regulator of G-protein signaling 9 (RGS9) from Homo sapiens (Human).